The following is a 228-amino-acid chain: Cytidylate kinase (228 aa).

17–25 (GPSASGKGT) is an ATP binding site.

Belongs to the cytidylate kinase family. Type 1 subfamily.

The protein resides in the cytoplasm. The catalysed reaction is CMP + ATP = CDP + ADP. The enzyme catalyses dCMP + ATP = dCDP + ADP. This Paraburkholderia xenovorans (strain LB400) protein is Cytidylate kinase.